A 520-amino-acid chain; its full sequence is Glucose-6-phosphate isomerase (520 aa).

The active-site Proton donor is the E327. Residues H358 and K486 contribute to the active site.

The protein belongs to the GPI family.

Its subcellular location is the cytoplasm. The catalysed reaction is alpha-D-glucose 6-phosphate = beta-D-fructose 6-phosphate. It participates in carbohydrate biosynthesis; gluconeogenesis. Its pathway is carbohydrate degradation; glycolysis; D-glyceraldehyde 3-phosphate and glycerone phosphate from D-glucose: step 2/4. Functionally, catalyzes the reversible isomerization of glucose-6-phosphate to fructose-6-phosphate. The protein is Glucose-6-phosphate isomerase of Bordetella avium (strain 197N).